The following is a 338-amino-acid chain: uncharacterized protein (338 aa).

The tract at residues 1–72 (MASPPILSRE…LNPVEDYDSK (72 aa)) is disordered. A compositionally biased stretch (polar residues) spans 24–38 (GGNSEVNIDPSASSS). The span at 49 to 58 (ADTKIDPHLL) shows a compositional bias: basic and acidic residues. The segment covering 59–68 (EEDDLNPVED) has biased composition (acidic residues).

It localises to the cytoplasm. It is found in the nucleus. This is an uncharacterized protein from Schizosaccharomyces pombe (strain 972 / ATCC 24843) (Fission yeast).